The sequence spans 152 residues: Putative pre-16S rRNA nuclease (152 aa).

The protein belongs to the YqgF nuclease family.

The protein localises to the cytoplasm. Functionally, could be a nuclease involved in processing of the 5'-end of pre-16S rRNA. This is Putative pre-16S rRNA nuclease from Nitrosococcus oceani (strain ATCC 19707 / BCRC 17464 / JCM 30415 / NCIMB 11848 / C-107).